The sequence spans 335 residues: Ficolin-1 (335 aa).

An N-terminal signal peptide occupies residues Met-1–Ser-17. A disordered region spans residues Ser-47–Leu-114. Residues Ser-50 to Pro-88 enclose the Collagen-like domain. Over residues Ser-75–Pro-88 the composition is skewed to low complexity. Residues Ala-117 to Ser-335 enclose the Fibrinogen C-terminal domain. 2 disulfide bridges follow: Cys-119–Cys-147 and Cys-126–Cys-154. The interval Pro-123 to Gly-162 is a domain; contributes to trimerization. Residues Trp-163–Thr-251 form a b domain; contributes to trimerization region. Ca(2+) is bound at residue Asp-270. N-linked (GlcNAc...) asparagine glycosylation occurs at Asn-271. Ca(2+) is bound at residue Asp-272. A disulfide bond links Cys-279 and Cys-292. Asp-291–His-293 serves as a coordination point for a carbohydrate. Residues Lys-326–Ser-335 are p domain.

This sequence belongs to the ficolin lectin family. In terms of assembly, homotrimer. Interacts with elastin/ELN. Interacts (via Fibrinogen C-terminal domain) with FFAR2. Interacts with CRP; may regulate monocyte activation by FCN1.

The protein localises to the secreted. Its subcellular location is the cell membrane. Extracellular lectin functioning as a pattern-recognition receptor in innate immunity. Binds the sugar moieties of pathogen-associated molecular patterns (PAMPs) displayed on microbes and activates the lectin pathway of the complement system. May also activate monocytes through a G protein-coupled receptor, FFAR2, inducing the secretion of interleukin-8/IL-8. Binds preferentially to 9-O-acetylated 2-6-linked sialic acid derivatives and to various glycans containing sialic acid engaged in a 2-3 linkage. The polypeptide is Ficolin-1 (Fcn1) (Rattus norvegicus (Rat)).